Reading from the N-terminus, the 146-residue chain is MMWQKYAGSRRSMPLGARILFHGVFYAGGFAIVYYLIQKFHSRALYYKLAVEQLQSHPEAQEALGPPLNIHYLKLIDRENFVDIVDAKLKIPVSGSKSEGLLYVHSSRGGPFQRWHLDEVFLELKDGQQIPVFKLSGENGDEVKKE.

The Mitochondrial matrix portion of the chain corresponds to 1–14; it reads MMWQKYAGSRRSMP. A helical transmembrane segment spans residues 15–37; that stretch reads LGARILFHGVFYAGGFAIVYYLI. Residues 38-146 lie on the Mitochondrial intermembrane side of the membrane; sequence QKFHSRALYY…GENGDEVKKE (109 aa).

Belongs to the COA1 family. Component of the MITRAC (mitochondrial translation regulation assembly intermediate of cytochrome c oxidase complex) complex, the core components of this complex being COA3/MITRAC12 and COX14. Interacts with COX17 and COA6. Part of the mitochondrial complex I assembly/MCIA complex that comprises at least the core subunits TMEM126B, NDUFAF1, ECSIT and ACAD9 and complement subunits such as COA1 and TMEM186.

Its subcellular location is the mitochondrion inner membrane. Component of the MITRAC (mitochondrial translation regulation assembly intermediate of cytochrome c oxidase complex) complex, that regulates cytochrome c oxidase assembly. MITRAC complexes regulate both translation of mitochondrial encoded components and assembly of nuclear-encoded components imported in mitochondrion. Required for assembly of mitochondrial respiratory chain complex I and complex IV. As part of the MCIA complex, required for efficient assembly of the mitochondrial complex I. The polypeptide is Cytochrome c oxidase assembly factor 1 homolog (Homo sapiens (Human)).